The chain runs to 95 residues: Aspartyl/glutamyl-tRNA(Asn/Gln) amidotransferase subunit C (95 aa).

This sequence belongs to the GatC family. As to quaternary structure, heterotrimer of A, B and C subunits.

The catalysed reaction is L-glutamyl-tRNA(Gln) + L-glutamine + ATP + H2O = L-glutaminyl-tRNA(Gln) + L-glutamate + ADP + phosphate + H(+). It carries out the reaction L-aspartyl-tRNA(Asn) + L-glutamine + ATP + H2O = L-asparaginyl-tRNA(Asn) + L-glutamate + ADP + phosphate + 2 H(+). Allows the formation of correctly charged Asn-tRNA(Asn) or Gln-tRNA(Gln) through the transamidation of misacylated Asp-tRNA(Asn) or Glu-tRNA(Gln) in organisms which lack either or both of asparaginyl-tRNA or glutaminyl-tRNA synthetases. The reaction takes place in the presence of glutamine and ATP through an activated phospho-Asp-tRNA(Asn) or phospho-Glu-tRNA(Gln). The chain is Aspartyl/glutamyl-tRNA(Asn/Gln) amidotransferase subunit C from Acetivibrio thermocellus (strain ATCC 27405 / DSM 1237 / JCM 9322 / NBRC 103400 / NCIMB 10682 / NRRL B-4536 / VPI 7372) (Clostridium thermocellum).